A 107-amino-acid polypeptide reads, in one-letter code: UPF0060 membrane protein M446_5886 (107 aa).

4 helical membrane passes run 4 to 24, 31 to 51, 59 to 79, and 85 to 105; these read LLAY…IWAW, PLWL…LTRV, AYAA…WAAE, and RWDL…LLGP.

The protein belongs to the UPF0060 family.

The protein localises to the cell inner membrane. This is UPF0060 membrane protein M446_5886 from Methylobacterium sp. (strain 4-46).